The chain runs to 651 residues: Probable potassium transport system protein Kup (651 aa).

12 helical membrane-spanning segments follow: residues 41-61, 82-102, 130-150, 163-183, 194-214, 235-255, 276-296, 309-329, 366-386, 395-415, 426-446, and 450-470; these read LVLGALGVVYGDIGTSPIYAF, VVSLIFWALTLVVTVKYVLFV, LILGVGICGAALFFGDAVITP, IVAPNLTPFVVPAAVVILVTL, VAIVFGPIMALWFVALGASGL, FLTVSPAVAFVTVGAVFLAMT, WLWIVFPCLLLNYFGQAAFIL, MIPSFALWPMVLLATAATVIA, IYIPRVNLLLGLAVVILVLGF, AYGIAVTGNMLVTTVLLYIAM, ALPIILGFLVIDMLFFSANII, and EGGWASIGIATVLVLIMWTWV.

Belongs to the HAK/KUP transporter (TC 2.A.72) family.

It is found in the cell inner membrane. It carries out the reaction K(+)(in) + H(+)(in) = K(+)(out) + H(+)(out). In terms of biological role, transport of potassium into the cell. Likely operates as a K(+):H(+) symporter. This Brucella abortus (strain S19) protein is Probable potassium transport system protein Kup.